The primary structure comprises 423 residues: Serine--tRNA ligase (423 aa).

Residue 231-233 (TAE) participates in L-serine binding. 262 to 264 (RSE) lines the ATP pocket. Glutamate 285 lines the L-serine pocket. 349-352 (EISS) provides a ligand contact to ATP. An L-serine-binding site is contributed by serine 384.

The protein belongs to the class-II aminoacyl-tRNA synthetase family. Type-1 seryl-tRNA synthetase subfamily. As to quaternary structure, homodimer. The tRNA molecule binds across the dimer.

The protein localises to the cytoplasm. It catalyses the reaction tRNA(Ser) + L-serine + ATP = L-seryl-tRNA(Ser) + AMP + diphosphate + H(+). It carries out the reaction tRNA(Sec) + L-serine + ATP = L-seryl-tRNA(Sec) + AMP + diphosphate + H(+). The protein operates within aminoacyl-tRNA biosynthesis; selenocysteinyl-tRNA(Sec) biosynthesis; L-seryl-tRNA(Sec) from L-serine and tRNA(Sec): step 1/1. Catalyzes the attachment of serine to tRNA(Ser). Is also able to aminoacylate tRNA(Sec) with serine, to form the misacylated tRNA L-seryl-tRNA(Sec), which will be further converted into selenocysteinyl-tRNA(Sec). This is Serine--tRNA ligase from Acinetobacter baylyi (strain ATCC 33305 / BD413 / ADP1).